A 720-amino-acid chain; its full sequence is Fatty acid oxidation complex subunit alpha (720 aa).

The tract at residues 1–189 (MIYQGETLSV…KLGLVDAVVA (189 aa)) is enoyl-CoA hydratase/isomerase. Residue Asp-296 participates in substrate binding. The tract at residues 311–720 (QPTKKGVVLG…ESYYTQQVNA (410 aa)) is 3-hydroxyacyl-CoA dehydrogenase. Residues Met-324, Asp-343, 400–402 (VVE), Lys-407, and Ser-429 contribute to the NAD(+) site. The For 3-hydroxyacyl-CoA dehydrogenase activity role is filled by His-450. NAD(+) is bound at residue Asn-453. Substrate contacts are provided by Asn-500 and Tyr-660.

In the N-terminal section; belongs to the enoyl-CoA hydratase/isomerase family. This sequence in the C-terminal section; belongs to the 3-hydroxyacyl-CoA dehydrogenase family. As to quaternary structure, heterotetramer of two alpha chains (FadB) and two beta chains (FadA).

The enzyme catalyses a (3S)-3-hydroxyacyl-CoA + NAD(+) = a 3-oxoacyl-CoA + NADH + H(+). It catalyses the reaction a (3S)-3-hydroxyacyl-CoA = a (2E)-enoyl-CoA + H2O. It carries out the reaction a 4-saturated-(3S)-3-hydroxyacyl-CoA = a (3E)-enoyl-CoA + H2O. The catalysed reaction is (3S)-3-hydroxybutanoyl-CoA = (3R)-3-hydroxybutanoyl-CoA. The enzyme catalyses a (3Z)-enoyl-CoA = a 4-saturated (2E)-enoyl-CoA. It catalyses the reaction a (3E)-enoyl-CoA = a 4-saturated (2E)-enoyl-CoA. The protein operates within lipid metabolism; fatty acid beta-oxidation. In terms of biological role, involved in the aerobic and anaerobic degradation of long-chain fatty acids via beta-oxidation cycle. Catalyzes the formation of 3-oxoacyl-CoA from enoyl-CoA via L-3-hydroxyacyl-CoA. It can also use D-3-hydroxyacyl-CoA and cis-3-enoyl-CoA as substrate. This Photobacterium profundum (strain SS9) protein is Fatty acid oxidation complex subunit alpha.